The chain runs to 81 residues: Photosystem I iron-sulfur center (81 aa).

4Fe-4S ferredoxin-type domains lie at 2–31 (AHSV…MVPW) and 39–68 (IASA…VRVY). [4Fe-4S] cluster-binding residues include Cys-11, Cys-14, Cys-17, Cys-21, Cys-48, Cys-51, Cys-54, and Cys-58.

In terms of assembly, the eukaryotic PSI reaction center is composed of at least 11 subunits. The cofactor is [4Fe-4S] cluster.

It localises to the plastid. The protein resides in the chloroplast thylakoid membrane. The enzyme catalyses reduced [plastocyanin] + hnu + oxidized [2Fe-2S]-[ferredoxin] = oxidized [plastocyanin] + reduced [2Fe-2S]-[ferredoxin]. Its function is as follows. Apoprotein for the two 4Fe-4S centers FA and FB of photosystem I (PSI); essential for photochemical activity. FB is the terminal electron acceptor of PSI, donating electrons to ferredoxin. The C-terminus interacts with PsaA/B/D and helps assemble the protein into the PSI complex. Required for binding of PsaD and PsaE to PSI. PSI is a plastocyanin-ferredoxin oxidoreductase, converting photonic excitation into a charge separation, which transfers an electron from the donor P700 chlorophyll pair to the spectroscopically characterized acceptors A0, A1, FX, FA and FB in turn. The protein is Photosystem I iron-sulfur center of Mesostigma viride (Green alga).